A 466-amino-acid polypeptide reads, in one-letter code: Transcription factor SOX-10 (466 aa).

Positions methionine 1 to lysine 67 are disordered. A compositionally biased stretch (low complexity) spans leucine 23–glycine 32. Serine 24 carries the phosphoserine modification. The tract at residues glutamate 62–proline 102 is dimerization (DIM). Residues valine 104–lysine 172 constitute a DNA-binding region (HMG box). The Nuclear export signal signature appears at leucine 134–leucine 145. Basic and acidic residues-rich tracts occupy residues leucine 160 to tyrosine 173 and alanine 254 to isoleucine 271. 4 disordered regions span residues leucine 160–glycine 199, leucine 212–glycine 274, alanine 354–threonine 375, and arginine 433–proline 466. The tract at residues proline 228 to valine 310 is transactivation domain (TAM). Residues lysine 353 to proline 466 form a transactivation domain (TAC) region. Residues serine 440–proline 466 show a composition bias toward polar residues.

In terms of assembly, monomer. Interacts with ARMCX3 at the mitochondrial outer membrane surface. Interacts with PAX3. In terms of tissue distribution, expressed in fetal brain and in adult brain, heart, small intestine and colon.

The protein resides in the cytoplasm. It is found in the nucleus. It localises to the mitochondrion outer membrane. In terms of biological role, transcription factor that plays a central role in developing and mature glia. Specifically activates expression of myelin genes, during oligodendrocyte (OL) maturation, such as DUSP15 and MYRF, thereby playing a central role in oligodendrocyte maturation and CNS myelination. Once induced, MYRF cooperates with SOX10 to implement the myelination program. Transcriptional activator of MITF, acting synergistically with PAX3. Transcriptional activator of MBP, via binding to the gene promoter. The protein is Transcription factor SOX-10 (SOX10) of Homo sapiens (Human).